The following is a 278-amino-acid chain: 4-diphosphocytidyl-2-C-methyl-D-erythritol kinase (278 aa).

The active site involves Lys9. 93–103 contributes to the ATP binding site; the sequence is PLGGGLGGGSS. Residue Asp135 is part of the active site.

It belongs to the GHMP kinase family. IspE subfamily.

It carries out the reaction 4-CDP-2-C-methyl-D-erythritol + ATP = 4-CDP-2-C-methyl-D-erythritol 2-phosphate + ADP + H(+). It participates in isoprenoid biosynthesis; isopentenyl diphosphate biosynthesis via DXP pathway; isopentenyl diphosphate from 1-deoxy-D-xylulose 5-phosphate: step 3/6. Functionally, catalyzes the phosphorylation of the position 2 hydroxy group of 4-diphosphocytidyl-2C-methyl-D-erythritol. This is 4-diphosphocytidyl-2-C-methyl-D-erythritol kinase from Nitrosomonas eutropha (strain DSM 101675 / C91 / Nm57).